Consider the following 229-residue polypeptide: Cilia- and flagella-associated protein 95 (229 aa).

Over 1–123 the chain is Extracellular; the sequence is MDSLDRSCQD…LLNEETVSSG (123 aa). A glycan (N-linked (GlcNAc...) asparagine) is linked at asparagine 75. The chain crosses the membrane as a helical span at residues 124–140; the sequence is IIERVTGLPATGFGAVF. Over 141–229 the chain is Cytoplasmic; it reads PRHPPDWSKM…PLTSGPIVPI (89 aa). The segment at 153 to 163 is mn; sequence LTTYSEDYVPP.

Microtubule inner protein component of sperm flagellar doublet microtubules. Interacts with MYH9. Interacts with MYH10. As to expression, expressed in undifferentiated embryonic stem cells. Expressed in airway epithelial cells.

Its subcellular location is the cytoplasm. The protein localises to the cytoskeleton. It localises to the cilium axoneme. It is found in the flagellum axoneme. The protein resides in the cell membrane. In terms of biological role, microtubule inner protein (MIP) part of the dynein-decorated doublet microtubules (DMTs) in cilia axoneme, which is required for motile cilia beating. The chain is Cilia- and flagella-associated protein 95 from Homo sapiens (Human).